The chain runs to 339 residues: Glycerol-3-phosphate dehydrogenase [NAD(P)+] (339 aa).

NADPH is bound by residues Ser-11, Trp-12, and Lys-109. 3 residues coordinate sn-glycerol 3-phosphate: Lys-109, Gly-140, and Ser-142. Residue Ala-144 coordinates NADPH. Positions 195, 249, 259, 260, and 261 each coordinate sn-glycerol 3-phosphate. Lys-195 functions as the Proton acceptor in the catalytic mechanism. Arg-260 serves as a coordination point for NADPH. Val-284 and Glu-286 together coordinate NADPH.

It belongs to the NAD-dependent glycerol-3-phosphate dehydrogenase family.

It localises to the cytoplasm. The enzyme catalyses sn-glycerol 3-phosphate + NAD(+) = dihydroxyacetone phosphate + NADH + H(+). It carries out the reaction sn-glycerol 3-phosphate + NADP(+) = dihydroxyacetone phosphate + NADPH + H(+). It participates in membrane lipid metabolism; glycerophospholipid metabolism. In terms of biological role, catalyzes the reduction of the glycolytic intermediate dihydroxyacetone phosphate (DHAP) to sn-glycerol 3-phosphate (G3P), the key precursor for phospholipid synthesis. The sequence is that of Glycerol-3-phosphate dehydrogenase [NAD(P)+] from Lactobacillus johnsonii (strain CNCM I-12250 / La1 / NCC 533).